A 619-amino-acid chain; its full sequence is Zinc finger protein 668 (619 aa).

Met1 is subject to N-acetylmethionine. Phosphoserine is present on Ser10. The C2H2-type 1 zinc-finger motif lies at 22–44 (YKCLFCTKTFPNAPRAARHAATH). The tract at residues 36 to 74 (RAARHAATHTPTDCTEEVREAQPKVDTEPKAEEASGDKV) is disordered. Basic and acidic residues predominate over residues 51 to 71 (EEVREAQPKVDTEPKAEEASG). Residues Lys59, Lys65, and Lys80 each participate in a glycyl lysine isopeptide (Lys-Gly) (interchain with G-Cter in SUMO2) cross-link. C2H2-type zinc fingers lie at residues 84 to 106 (YACPLCPKAYKTAPELRSHGRSH), 112 to 134 (FPCPECGRRFMQPVCLRVHLASH), 140 to 162 (FRCTHCPKAYGTLSKLKIHQRGH), 168 to 190 (YACPDCGKSFADPSVFRKHRRTH), 196 to 218 (YSCERCGKAYAELKDLRNHERSH), 224 to 246 (FLCSECGKSFSRSSSLTCHQRIH), 252 to 274 (YRCPACGKGFTQLSSYQSHERTH), 280 to 302 (FLCPRCGRMFSDPSSFRRHQRAH), 308 to 330 (YRCEKCGKDFRQPADLAMHRRVH), 336 to 358 (FKCLQCDKTFVASWDLKRHALVH), and 364 to 386 (FRCEECGRAFAERASLTKHSRMH). Lys154 participates in a covalent cross-link: Glycyl lysine isopeptide (Lys-Gly) (interchain with G-Cter in SUMO2). Ser387 carries the post-translational modification Phosphoserine. The segment at 392 to 414 (FHCNACGKSFVVLSSLRKHERTH) adopts a C2H2-type 13 zinc-finger fold. The segment at 491 to 513 (VGEAPSTLGDAGEVGGEETDEKP) is disordered. Lys512 participates in a covalent cross-link: Glycyl lysine isopeptide (Lys-Gly) (interchain with G-Cter in SUMO2). 3 consecutive C2H2-type zinc fingers follow at residues 516 to 538 (FVCRECKETFSTLTLLRRHERSH), 544 to 566 (FPCTQCGKSFSDRAGLRKHSRTH), and 572 to 594 (YSCSQCPKAFLSASDLRKHERTH).

Belongs to the krueppel C2H2-type zinc-finger protein family.

It is found in the nucleus. Its function is as follows. May be involved in transcriptional regulation. May play a role in DNA repair process. This Mus musculus (Mouse) protein is Zinc finger protein 668 (Znf668).